Consider the following 1765-residue polypeptide: Tight junction protein ZO-1 (1765 aa).

Residues 23–110 enclose the PDZ 1 domain; the sequence is TVTLHRAPGF…NAKITIRRKK (88 aa). The span at 102 to 112 shows a compositional bias: basic residues; that stretch reads AKITIRRKKKV. Residues 102-189 form a disordered region; the sequence is AKITIRRKKK…QPAKPTKVTL (88 aa). Over residues 123-136 the composition is skewed to acidic residues; the sequence is PVSDNEDDSYDEDV. Ser-125 bears the Phosphoserine mark. Tyr-132 carries the phosphotyrosine modification. A compositionally biased stretch (basic and acidic residues) spans 149–175; the sequence is RRGEKSWARDRSASRDRSLSPRSDRRS. Ser-175, Ser-178, and Ser-179 each carry phosphoserine. A Phosphothreonine modification is found at Thr-185. The region spanning 186-264 is the PDZ 2 domain; that stretch reads KVTLVKSRKN…KLKMVVQRDE (79 aa). A phosphoserine mark is found at Ser-212 and Ser-241. Phosphothreonine is present on Thr-267. Phosphoserine occurs at positions 275, 277, 280, 284, 290, 294, 297, 300, 323, 329, 334, 337, and 353. Positions 296–363 are disordered; sequence ASDHSVRSHD…TPVKHVDDHT (68 aa). The span at 299–308 shows a compositional bias: basic and acidic residues; the sequence is HSVRSHDRPP. Polar residues predominate over residues 325-338; it reads HSTQSPQQPSNGSL. Thr-354 carries the phosphothreonine modification. In terms of domain architecture, PDZ 3 spans 421-502; it reads SMKLVKFRKG…GEEVTILAQK (82 aa). Residues 516 to 584 form the SH3 domain; that stretch reads GDSFYIRTHF…PNKNRAEQLA (69 aa). 2 positions are modified to phosphoserine: Ser-617 and Ser-622. Positions 633–876 are occludin (OCLN)-binding region; it reads YERVVLREAG…GTPPESAITR (244 aa). The 102-residue stretch at 690–791 folds into the Guanylate kinase-like domain; the sequence is RLHTIKQIID…WYGALKEAIQ (102 aa). A Phosphothreonine modification is found at Thr-809. Ser-810 and Ser-821 each carry phosphoserine. Position 822 is a phosphotyrosine (Tyr-822). Residues Ser-824, Ser-828, and Ser-837 each carry the phosphoserine modification. 2 disordered regions span residues 825-941 and 1023-1042; these read APGS…PASS and ALGH…YDPQ. Phosphothreonine is present on residues Thr-846, Thr-848, Thr-854, Thr-861, and Thr-868. Residues 879–892 show a composition bias toward basic and acidic residues; the sequence is EPVREDSSGMHHEN. The segment covering 893–906 has biased composition (low complexity); that stretch reads QTYPPYSPQAQPQA. Ser-912 bears the Phosphoserine mark. Ser-1071 is modified (phosphoserine). The disordered stretch occupies residues 1092 to 1585; sequence SYYDDKQPYP…SSTQPPEFDS (494 aa). Residues 1106-1124 are compositionally biased toward basic and acidic residues; it reads DTQHPRDLDSRQHPEEASE. Residues Tyr-1139 and Tyr-1164 each carry the phosphotyrosine modification. Residues 1150–1370 are actin-binding region (ABR); sequence RTSTLRHEEQ…FDRRSFESKP (221 aa). Basic and acidic residues-rich tracts occupy residues 1268-1285 and 1335-1346; these read KMFE…KDVN and PPEDIVRSNHYD. Phosphotyrosine is present on Tyr-1353. Ser-1365 bears the Phosphoserine mark. Positions 1388 to 1399 are enriched in low complexity; sequence SQSQPNFSSYSS. Residues 1401-1418 show a composition bias toward basic and acidic residues; the sequence is GKPETDAMDRSFSEKRYD. Ser-1411 is modified (phosphoserine). 2 stretches are compositionally biased toward polar residues: residues 1442–1468 and 1509–1519; these read NSSL…NSYI and GAEQTQKTITP. Over residues 1535–1544 the composition is skewed to basic and acidic residues; it reads PFERKFESPK. A phosphoserine mark is found at Ser-1542 and Ser-1614. The ZU5 domain maps to 1631–1765; the sequence is ATARGIFNSN…NCVSVLIDHF (135 aa).

This sequence belongs to the MAGUK family. In terms of assembly, homodimer. Forms heterodimers TJP3. Forms a heterodimer (via PDZ2 domain) with TJP2/ZO2 (via PDZ2 domain). Interacts with OCLN. Interacts with CALM, claudins, CGN/cingulin, CXADR, GJA12, GJD3 and UBN1. Interacts (via ZU5 domain) with CDC42BPB and MYZAP. Interacts (via PDZ domain) with GJA1. Interacts (via PDZ domains) with ANKRD2. Interacts with BVES (via the C-terminus cytoplasmic tail). Interacts with HSPA4. Interacts with KIRREL1. Interacts with DLL1. Interacts with USP53 (via the C-terminal region). Interacts with DNMBP (via C-terminal domain); required for the apical cell-cell junction localization of DNMBP. Interacts with SPEF1. Interacts (via N-terminus) with CTNNA1. Interacts with CLDN18. Interacts with CLDN16 (via TRV motif); this is a prerequisite for anchoring of CLDN16 at the tight junction. Interacts with PKP1; the interaction facilitates TJP1/ZO-1 localization to the plasma membrane. In terms of processing, phosphorylated at tyrosine redidues in response to epidermal growth factor (EGF). This response is dependent on an intact actin microfilament system. Dephosphorylated by Ptprj.

Its subcellular location is the cell membrane. The protein localises to the cell junction. The protein resides in the tight junction. It localises to the gap junction. TjpP1, Tjp2, and Tjp3 are closely related scaffolding proteins that link tight junction (TJ) transmembrane proteins such as claudins, junctional adhesion molecules, and occludin to the actin cytoskeleton. The tight junction acts to limit movement of substances through the paracellular space and as a boundary between the compositionally distinct apical and basolateral plasma membrane domains of epithelial and endothelial cells. Necessary for lumenogenesis, and particularly efficient epithelial polarization and barrier formation. Plays a role in the regulation of cell migration by targeting Cdc42bpb to the leading edge of migrating cells. Plays an important role in podosome formation and associated function, thus regulating cell adhesion and matrix remodeling. With Tjp2 and Tjp3, participates in the junctional retention and stability of the transcription factor Dbpa, but is not involved in its shuttling to the nucleus. May play a role in mediating cell morphology changes during ameloblast differentiation via its role in tight junctions. The protein is Tight junction protein ZO-1 of Rattus norvegicus (Rat).